A 142-amino-acid chain; its full sequence is Hdr-like menaquinol oxidoreductase cytochrome c subunit (142 aa).

Residues 1-6 are Cytoplasmic-facing; it reads MYNKKY. The chain crosses the membrane as a helical span at residues 7–27; that stretch reads VIPLILVFLIGFFTPYWYNAM. The Extracellular portion of the chain corresponds to 28-142; sequence AGTLGHVPTL…GIEELSKYFS (115 aa). Heme contacts are provided by cysteine 93, cysteine 96, histidine 97, cysteine 104, cysteine 107, histidine 108, cysteine 117, cysteine 120, and histidine 121.

In terms of assembly, consists of five subunits: an integral membrane subunit, a cytochrome b-like subunit, a cytochrome c subunit and two iron-sulfur subunits. Binds 3 heme groups per subunit.

It localises to the cell membrane. Its function is as follows. Has menaquinol-oxidizing activity. HmeA, HmeB and HmeE subunits may together catalyze electron transfer from menaquinol to cytochrome c. This Archaeoglobus fulgidus (strain ATCC 49558 / DSM 4304 / JCM 9628 / NBRC 100126 / VC-16) protein is Hdr-like menaquinol oxidoreductase cytochrome c subunit (hmeE).